The chain runs to 399 residues: Beta sliding clamp (399 aa).

It belongs to the beta sliding clamp family. As to quaternary structure, forms a ring-shaped head-to-tail homodimer around DNA which binds and tethers DNA polymerases and other proteins to the DNA. The DNA replisome complex has a single clamp-loading complex (3 tau and 1 each of delta, delta', psi and chi subunits) which binds 3 Pol III cores (1 core on the leading strand and 2 on the lagging strand) each with a beta sliding clamp dimer. Additional proteins in the replisome are other copies of gamma, psi and chi, Ssb, DNA helicase and RNA primase.

The protein localises to the cytoplasm. In terms of biological role, confers DNA tethering and processivity to DNA polymerases and other proteins. Acts as a clamp, forming a ring around DNA (a reaction catalyzed by the clamp-loading complex) which diffuses in an ATP-independent manner freely and bidirectionally along dsDNA. Initially characterized for its ability to contact the catalytic subunit of DNA polymerase III (Pol III), a complex, multichain enzyme responsible for most of the replicative synthesis in bacteria; Pol III exhibits 3'-5' exonuclease proofreading activity. The beta chain is required for initiation of replication as well as for processivity of DNA replication. This chain is Beta sliding clamp (dnaN), found in Mycobacterium leprae (strain TN).